A 456-amino-acid polypeptide reads, in one-letter code: Bifunctional protein GlmU (456 aa).

The segment at 1–230 (MDKRFAVVLA…FQETLGVNDR (230 aa)) is pyrophosphorylase. Residues 9–12 (LAAG), lysine 23, glutamine 73, and 78–79 (GT) contribute to the UDP-N-acetyl-alpha-D-glucosamine site. Aspartate 103 is a Mg(2+) binding site. Residues glycine 140, glutamate 155, asparagine 170, and asparagine 228 each coordinate UDP-N-acetyl-alpha-D-glucosamine. Asparagine 228 contributes to the Mg(2+) binding site. The segment at 231–251 (VALSQAEQFMKERINKRHMQN) is linker. The interval 252–456 (GVTLIDPMNT…DDYVKNIHKK (205 aa)) is N-acetyltransferase. Residues arginine 333 and lysine 351 each contribute to the UDP-N-acetyl-alpha-D-glucosamine site. Histidine 363 acts as the Proton acceptor in catalysis. UDP-N-acetyl-alpha-D-glucosamine-binding residues include tyrosine 366 and asparagine 377. Residues 386–387 (NY), alanine 423, and arginine 440 contribute to the acetyl-CoA site.

The protein in the N-terminal section; belongs to the N-acetylglucosamine-1-phosphate uridyltransferase family. This sequence in the C-terminal section; belongs to the transferase hexapeptide repeat family. In terms of assembly, homotrimer. It depends on Mg(2+) as a cofactor.

The protein resides in the cytoplasm. It carries out the reaction alpha-D-glucosamine 1-phosphate + acetyl-CoA = N-acetyl-alpha-D-glucosamine 1-phosphate + CoA + H(+). The catalysed reaction is N-acetyl-alpha-D-glucosamine 1-phosphate + UTP + H(+) = UDP-N-acetyl-alpha-D-glucosamine + diphosphate. Its pathway is nucleotide-sugar biosynthesis; UDP-N-acetyl-alpha-D-glucosamine biosynthesis; N-acetyl-alpha-D-glucosamine 1-phosphate from alpha-D-glucosamine 6-phosphate (route II): step 2/2. It participates in nucleotide-sugar biosynthesis; UDP-N-acetyl-alpha-D-glucosamine biosynthesis; UDP-N-acetyl-alpha-D-glucosamine from N-acetyl-alpha-D-glucosamine 1-phosphate: step 1/1. The protein operates within bacterial outer membrane biogenesis; LPS lipid A biosynthesis. Functionally, catalyzes the last two sequential reactions in the de novo biosynthetic pathway for UDP-N-acetylglucosamine (UDP-GlcNAc). The C-terminal domain catalyzes the transfer of acetyl group from acetyl coenzyme A to glucosamine-1-phosphate (GlcN-1-P) to produce N-acetylglucosamine-1-phosphate (GlcNAc-1-P), which is converted into UDP-GlcNAc by the transfer of uridine 5-monophosphate (from uridine 5-triphosphate), a reaction catalyzed by the N-terminal domain. This Bacillus subtilis (strain 168) protein is Bifunctional protein GlmU.